We begin with the raw amino-acid sequence, 438 residues long: MAVSEIKPKLKLNPLTKVPISHNKRDRDLPGSLQCQLQHKEKKLSASQMAAFQDAYNFFYKDKTGCIDFHGLMCTVAKLGMNLTKHDVYNELKCADIDRDGKVNFSDFIKVLTDKNLFLKAVVPEKETCLDLAGNPGILLFEILSRLLETSALPRKSIIEIVSYFQRKFQHTGPGMLWSPYTMGYGKRTLKPDICTPPSSSMAAFANAARIAIMKEKDLFKFLEELKRCNSGSDSPYSKIPIFPLFPNVDGVVMGKPFKDMQKLEMLRIKEPLHFFEDYFFHKRDWKTQAANIKSMDPASGYSNNIFTIDQMLKKKQTCTVADATAIKQHVKRATDTYNLGIALEHRKEMLNLWQKIRGDLIGMDSRNESFYDTFSTYTWSWNVCQELLSPKDLRLYDAYVNRNSSHNSRSSSSSDTSECYTDSGRKRKRKGLKGFQQ.

EF-hand domains lie at serine 47–asparagine 82 and leucine 83–phenylalanine 118. Residues aspartate 96, aspartate 98, aspartate 100, lysine 102, and aspartate 107 each contribute to the Ca(2+) site. Tyrosine 279 bears the Phosphotyrosine mark. Low complexity predominate over residues serine 405–serine 415. A disordered region spans residues serine 405–glutamine 438. Over residues arginine 426–glutamine 438 the composition is skewed to basic residues.

The chain is EF-hand calcium-binding domain-containing protein 3 (EFCAB3) from Homo sapiens (Human).